The primary structure comprises 429 residues: Ribosomal RNA small subunit methyltransferase B (429 aa).

S-adenosyl-L-methionine-binding positions include 254 to 260 (CAAPGGK), D277, D303, and D322. Catalysis depends on C375, which acts as the Nucleophile.

This sequence belongs to the class I-like SAM-binding methyltransferase superfamily. RsmB/NOP family.

The protein localises to the cytoplasm. The enzyme catalyses cytidine(967) in 16S rRNA + S-adenosyl-L-methionine = 5-methylcytidine(967) in 16S rRNA + S-adenosyl-L-homocysteine + H(+). Specifically methylates the cytosine at position 967 (m5C967) of 16S rRNA. The polypeptide is Ribosomal RNA small subunit methyltransferase B (Shigella boydii serotype 4 (strain Sb227)).